A 236-amino-acid chain; its full sequence is Large ribosomal subunit protein uL3 (236 aa).

The protein belongs to the universal ribosomal protein uL3 family. As to quaternary structure, part of the 50S ribosomal subunit. Forms a cluster with proteins L14 and L19.

One of the primary rRNA binding proteins, it binds directly near the 3'-end of the 23S rRNA, where it nucleates assembly of the 50S subunit. The sequence is that of Large ribosomal subunit protein uL3 from Mycoplasmoides gallisepticum (strain R(low / passage 15 / clone 2)) (Mycoplasma gallisepticum).